The chain runs to 288 residues: Proteasome assembly chaperone 1 (288 aa).

The segment at 1–33 (MATFFGEVQSVFSRAVDEEEEDEDDDEEEEEDR) is disordered. Residues 17–33 (DEEEEDEDDDEEEEEDR) are compositionally biased toward acidic residues.

This sequence belongs to the PSMG1 family. As to quaternary structure, forms a heterodimer with psmg2. Degraded by the proteasome upon completion of 20S proteasome maturation.

It localises to the cytoplasm. It is found in the endoplasmic reticulum. In terms of biological role, chaperone protein which promotes assembly of the 20S proteasome as part of a heterodimer with psmg2. The chain is Proteasome assembly chaperone 1 from Xenopus laevis (African clawed frog).